Consider the following 372-residue polypeptide: Glutamate 5-kinase (372 aa).

Lysine 14 serves as a coordination point for ATP. Residues serine 54, aspartate 141, and asparagine 153 each contribute to the substrate site. 173–174 (TD) is an ATP binding site. In terms of domain architecture, PUA spans 280-358 (RGTLVLDDGA…ESIVRELGYM (79 aa)).

This sequence belongs to the glutamate 5-kinase family.

Its subcellular location is the cytoplasm. It catalyses the reaction L-glutamate + ATP = L-glutamyl 5-phosphate + ADP. It participates in amino-acid biosynthesis; L-proline biosynthesis; L-glutamate 5-semialdehyde from L-glutamate: step 1/2. Catalyzes the transfer of a phosphate group to glutamate to form L-glutamate 5-phosphate. This Pseudomonas syringae pv. syringae (strain B728a) protein is Glutamate 5-kinase.